The following is a 162-amino-acid chain: Cyanate hydratase (162 aa).

Residues Arg103, Glu106, and Ser129 contribute to the active site.

The protein belongs to the cyanase family.

The catalysed reaction is cyanate + hydrogencarbonate + 3 H(+) = NH4(+) + 2 CO2. Functionally, catalyzes the reaction of cyanate with bicarbonate to produce ammonia and carbon dioxide. This chain is Cyanate hydratase, found in Phaeosphaeria nodorum (strain SN15 / ATCC MYA-4574 / FGSC 10173) (Glume blotch fungus).